A 435-amino-acid chain; its full sequence is Solute carrier family 38 member 8 (435 aa).

Transmembrane regions (helical) follow at residues 29-49, 55-75, 100-120, 151-171, 178-198, 218-240, 250-270, 295-315, 348-368, 374-394, and 410-430; these read AVFI…PWAF, VVPA…GLVI, IGKL…VAFL, FTLP…REIA, ILGT…YYLW, VFSV…SIYC, WALV…LTGV, IIVA…IVLF, MPLT…MPDL, IIGG…LICA, and VWGV…TAAA.

It belongs to the amino acid/polyamine transporter 2 family. As to expression, expressed in fetal and adult brain, and spinal cord. In the brain, it is localized in the cell body and axon of the majority of neuronal cells and in a subset of glial cells. Found throughout the neuronal retina, with higher expression levels in the inner and outer plexiform layers and the photoreceptor layer. Very weak expression is also present in the kidneys, thymus, and testes.

The protein resides in the membrane. It localises to the cytoplasm. The protein localises to the cell cortex. Its subcellular location is the cell projection. It is found in the axon. The enzyme catalyses L-glutamine(out) = L-glutamine(in). It carries out the reaction L-alanine(in) = L-alanine(out). The catalysed reaction is L-histidine(out) = L-histidine(in). It catalyses the reaction L-aspartate(out) = L-aspartate(in). The enzyme catalyses L-arginine(in) = L-arginine(out). It carries out the reaction L-leucine(in) = L-leucine(out). Electrogenic sodium-dependent amino acid transporter with a preference for L-glutamine, L-alanine, L-histidine, L-aspartate and L-arginine. May facilitate glutamine uptake in both excitatory and inhibitory neurons. The transport mechanism and stoichiometry remain to be elucidated. The protein is Solute carrier family 38 member 8 of Homo sapiens (Human).